The chain runs to 182 residues: UPF0316 protein BCB4264_A3368 (182 aa).

Transmembrane regions (helical) follow at residues 6–26 (LIFV…ILLV), 32–52 (SAAG…GIVF), and 58–78 (WMNI…GGYI).

Belongs to the UPF0316 family.

The protein resides in the cell membrane. This chain is UPF0316 protein BCB4264_A3368, found in Bacillus cereus (strain B4264).